The chain runs to 299 residues: Proline iminopeptidase (299 aa).

The AB hydrolase-1 domain occupies 26 to 272 (VLLLAGGPGF…QFLYCANGSH (247 aa)). Serine 103 (nucleophile) is an active-site residue. Residue aspartate 245 is part of the active site. Histidine 272 acts as the Proton donor in catalysis.

Belongs to the peptidase S33 family. In terms of assembly, monomer.

The catalysed reaction is Release of N-terminal proline from a peptide.. Functionally, releases the N-terminal proline from various substrates. This Chitinophaga pinensis (strain ATCC 43595 / DSM 2588 / LMG 13176 / NBRC 15968 / NCIMB 11800 / UQM 2034) protein is Proline iminopeptidase.